Here is a 415-residue protein sequence, read N- to C-terminus: tRNA(Ile2) 2-agmatinylcytidine synthetase TiaS (415 aa).

It belongs to the TiaS family.

The protein localises to the cytoplasm. It carries out the reaction cytidine(34) in tRNA(Ile2) + agmatine + ATP + H2O = 2-agmatinylcytidine(34) in tRNA(Ile2) + AMP + 2 phosphate + 2 H(+). Its function is as follows. ATP-dependent agmatine transferase that catalyzes the formation of 2-agmatinylcytidine (agm2C) at the wobble position (C34) of tRNA(Ile2), converting the codon specificity from AUG to AUA. The polypeptide is tRNA(Ile2) 2-agmatinylcytidine synthetase TiaS (Methanocorpusculum labreanum (strain ATCC 43576 / DSM 4855 / Z)).